Here is a 103-residue protein sequence, read N- to C-terminus: c-Myc-binding protein (103 aa).

This sequence belongs to the AMY1 family. As to quaternary structure, binds via its C-terminal region to the N-terminal region of MYC. Associates with AKAP1/S-AKAP84. Interacts with MYCBPAP. Interacts with CFAP91.

The protein resides in the cytoplasm. It localises to the nucleus. In terms of biological role, may control the transcriptional activity of MYC. Stimulates the activation of E box-dependent transcription by MYC. This chain is c-Myc-binding protein (Mycbp), found in Mus musculus (Mouse).